Reading from the N-terminus, the 236-residue chain is Kinetochore protein Spc25 (236 aa).

Residues 44 to 106 are a coiled coil; the sequence is KNIISAKEAI…DMEAQLLRHT (63 aa). Residues 194–217 are disordered; the sequence is EVAGASPVTPSGSERPKATSKHSN.

Belongs to the SPC25 family. Component of the Ndc80 complex, which is composed of Ndc80, Nuf2 and Spc25.

It localises to the nucleus. It is found in the chromosome. The protein resides in the centromere. Its subcellular location is the kinetochore. Acts as a component of the essential kinetochore-associated Ndc80 complex, which is required for chromosome segregation and spindle checkpoint activity during meiosis and mitosis. Required for kinetochore integrity and the organization of stable microtubule binding sites in the outer plate of the kinetochore. Participates in SAC signaling that responds specifically to disruptions in spindle microtubule dynamics. The NDC80 complex synergistically enhances the affinity of the SKA1 complex for microtubules and may allow the NDC80 complex to track depolymerizing microtubules. The protein is Kinetochore protein Spc25 of Drosophila persimilis (Fruit fly).